Consider the following 352-residue polypeptide: [Citrate [pro-3S]-lyase] ligase (352 aa).

In terms of domain architecture, N-acetyltransferase spans 1–128; it reads MFGNDIFTRV…VMVLMENSAT (128 aa).

The enzyme catalyses holo-[citrate lyase ACP] + acetate + ATP = acetyl-[citrate lyase ACP] + AMP + diphosphate. Functionally, acetylation of prosthetic group (2-(5''-phosphoribosyl)-3'-dephosphocoenzyme-A) of the gamma subunit of citrate lyase. This is [Citrate [pro-3S]-lyase] ligase (citC) from Escherichia coli (strain K12).